We begin with the raw amino-acid sequence, 320 residues long: MATPTIKLNSGFDMPLVGFGLWKVNNDTCADQVYEAIKAGYRLFDGACDYGNEVEAGQGVARAIKEGIVKREELFIVSKLWNSFHDGDKVEPICRKQLADWGVDYFDLYIVHFPVALKYVDPAVRYPPGWSAKGDGSIEFSNASIQETWTAMETLVDKKLARSIGVSNFSAQLLMDLLRYARVRPATLQIEHHPYLTQPRLVEYAQKEGIAVTAYSSFGPLSFLELQVPNATNISPLFEHDVVKSVADKHGKTPAQVLLRWSTQRGIAVIPKSNNPTRLSQNLEVTGWDLEQSEIDAISALDIGLRFNDPIGYGMYVPIF.

Y50 functions as the Proton donor in the catalytic mechanism. Position 112 (H112) interacts with substrate. Residues 167–168, 216–225, and 272–282 contribute to the NAD(+) site; these read SN, SSFGPLSFLE, and KSNNPTRLSQN.

The protein belongs to the aldo/keto reductase family.

The catalysed reaction is xylitol + NAD(+) = D-xylose + NADH + H(+). It carries out the reaction xylitol + NADP(+) = D-xylose + NADPH + H(+). It participates in carbohydrate metabolism; D-xylose degradation. Functionally, catalyzes the initial reaction in the xylose utilization pathway by reducing D-xylose into xylitol. Xylose is a major component of hemicelluloses such as xylan. Most fungi utilize D-xylose via three enzymatic reactions, xylose reductase (XR), xylitol dehydrogenase (XDH), and xylulokinase, to form xylulose 5-phosphate, which enters pentose phosphate pathway. The protein is Probable NAD(P)H-dependent D-xylose reductase xyl1 (xyl1) of Aspergillus terreus (strain NIH 2624 / FGSC A1156).